Here is a 154-residue protein sequence, read N- to C-terminus: Putative NADPH-dependent 7-cyano-7-deazaguanine reductase (154 aa).

Asp-52 acts as the Proton donor in catalysis. Substrate is bound by residues 67–69 (VES) and 86–87 (HE).

Belongs to the GTP cyclohydrolase I family. QueF type 1 subfamily.

Its subcellular location is the cytoplasm. The enzyme catalyses 7-aminomethyl-7-carbaguanine + 2 NADP(+) = 7-cyano-7-deazaguanine + 2 NADPH + 3 H(+). It functions in the pathway tRNA modification; tRNA-queuosine biosynthesis. Its function is as follows. Catalyzes the NADPH-dependent reduction of 7-cyano-7-deazaguanine (preQ0) to 7-aminomethyl-7-deazaguanine (preQ1). The polypeptide is Putative NADPH-dependent 7-cyano-7-deazaguanine reductase (Streptococcus pneumoniae serotype 4 (strain ATCC BAA-334 / TIGR4)).